Consider the following 407-residue polypeptide: Protein NIS1 (407 aa).

Residues 41-61 show a composition bias toward low complexity; sequence SNSNSNSNTNSNTNSNTNSNS. Residues 41 to 64 form a disordered region; it reads SNSNSNSNTNSNTNSNTNSNSDTK. 4 positions are modified to phosphoserine: Ser-260, Ser-264, Ser-300, and Ser-302. The span at 277-302 shows a compositional bias: polar residues; it reads IKQNSTTPTTRSVYNKNVGRSNTSPS. The interval 277-315 is disordered; sequence IKQNSTTPTTRSVYNKNVGRSNTSPSVLYHPKRRGKLNT. Over residues 306-315 the composition is skewed to basic residues; the sequence is HPKRRGKLNT. Residues 391-398 carry the SUMO-binding motif; that stretch reads IIIPDSQD.

Interacts with CBF2, GIS1, NAP1, PRM8, REI1, SHS1 and SMT3.

It is found in the bud neck. Its subcellular location is the cytoplasm. It localises to the cell cortex. May be involved in a mitotic signaling network. Binds sumoylated proteins and may stabilize SUMO chains. The chain is Protein NIS1 (NIS1) from Saccharomyces cerevisiae (strain ATCC 204508 / S288c) (Baker's yeast).